We begin with the raw amino-acid sequence, 316 residues long: Na(+)/H(+) exchange regulatory cofactor NHE-RF2 (316 aa).

Residues 11 to 91 (LCRLVRGEQG…ETRLLVVDKE (81 aa)) enclose the PDZ 1 domain. The interval 109–148 (QRGLPPAHDPWEPKPDWARAGSLSSDAGQKDVNGPPRELR) is disordered. A phosphoserine mark is found at S130, S183, and S254. Residues 151–231 (LCHLRKGPQG…EARLLLVDPE (81 aa)) form the PDZ 2 domain. The tract at residues 244 to 303 (TEEHVEGPLPSPITNGTSPAQDASAWKRDPFQESGLHLSPTAAEAKEKARATRVNKRAPQ) is disordered. The segment covering 255–264 (PITNGTSPAQ) has biased composition (polar residues). S282 carries the phosphoserine modification.

In terms of assembly, homodimer, and heterodimer with NHERF1. Binds ADRB2, SLC9A3, P2RY1, P2YR2, SRY, RDX, PDZK1 and LPAR2. Found in a complex with EZR, PODXL and NHERF2. Interacts (via the PDZ domains) with PODXL (via the C-terminal PDZ-binding motif DTHL); interaction is detected in glomerular epithelium cells. Binds PODXL. Interacts with SGK1 and KCNJ1/ROMK1. Interacts (via the PDZ domains) with SLC26A6. Detected in kidney glomeruli.

It localises to the endomembrane system. It is found in the nucleus. The protein localises to the apical cell membrane. Its function is as follows. Scaffold protein that connects plasma membrane proteins with members of the ezrin/moesin/radixin family and thereby helps to link them to the actin cytoskeleton and to regulate their surface expression. Necessary for cAMP-mediated phosphorylation and inhibition of SLC9A3. May also act as scaffold protein in the nucleus. This chain is Na(+)/H(+) exchange regulatory cofactor NHE-RF2 (NHERF2), found in Oryctolagus cuniculus (Rabbit).